Consider the following 372-residue polypeptide: N-methyl-L-tryptophan oxidase (372 aa).

An FAD-binding site is contributed by 4-34 (DLIIIGSGSVGAAAGYYATRAGLNVLMTDAH). An S-8alpha-FAD cysteine modification is found at Cys-308.

It belongs to the MSOX/MTOX family. MTOX subfamily. As to quaternary structure, monomer. The cofactor is FAD.

It catalyses the reaction N(alpha)-methyl-L-tryptophan + O2 + H2O = L-tryptophan + formaldehyde + H2O2. Catalyzes the oxidative demethylation of N-methyl-L-tryptophan. This chain is N-methyl-L-tryptophan oxidase, found in Escherichia coli O6:H1 (strain CFT073 / ATCC 700928 / UPEC).